The following is a 220-amino-acid chain: Kinetochore protein Spc25 (220 aa).

A coiled-coil region spans residues 79 to 114; the sequence is HLTQEVEAIKLRNLAMKDQIKQQKMLNNQRKNEIME.

It belongs to the SPC25 family. As to quaternary structure, component of the Ndc80 complex, which is composed of Ndc80, Nuf2 and Spc25.

It is found in the nucleus. The protein resides in the chromosome. Its subcellular location is the centromere. It localises to the kinetochore. Functionally, acts as a component of the essential kinetochore-associated Ndc80 complex, which is required for chromosome segregation and spindle checkpoint activity during meiosis and mitosis. Required for kinetochore integrity and the organization of stable microtubule binding sites in the outer plate of the kinetochore. Participates in SAC signaling that responds specifically to disruptions in spindle microtubule dynamics. The NDC80 complex synergistically enhances the affinity of the SKA1 complex for microtubules and may allow the NDC80 complex to track depolymerizing microtubules. The chain is Kinetochore protein Spc25 from Drosophila orena (Fruit fly).